Consider the following 505-residue polypeptide: Sucrose porin (505 aa).

A signal peptide spans 1-22 (MYKKRKLAILIALLTGTAAAHG). Residues 44–94 (ETRASTAESRAASAEQKVQQLTQQQQQTQATTQQVARRTTQLEEKAERPGG) form a disordered region. The segment covering 46–82 (RASTAESRAASAEQKVQQLTQQQQQTQATTQQVARRT) has biased composition (low complexity). A compositionally biased stretch (basic and acidic residues) spans 83–93 (TQLEEKAERPG).

This sequence belongs to the porin LamB (TC 1.B.3) family. Homotrimer.

Its subcellular location is the cell outer membrane. Porin for sucrose uptake. The protein is Sucrose porin (scrY) of Klebsiella pneumoniae.